We begin with the raw amino-acid sequence, 264 residues long: MEKIKVCLVDDNKELVSMLESYVAAQDDMEVIGTAYNGQECLNLLTDKQPDVLVLDIIMPHLDGLAVLEKMRHIERLKQPSVIMLTAFGQEDVTKKAVDLGASYFILKPFDMENLTSHIRQVSGKANAMIKRPLPSFRSATTVDGKPKNLDASITSIIHEIGVPAHIKGYMYLREAISMVYNDIELLGSITKVLYPDIAKKYNTTASRVERAIRHAIEVAWSRGNIDSISSLFGYTVSMSKAKPTNSEFIAMVADKLRLEHKAS.

Residues 5–123 (KVCLVDDNKE…NLTSHIRQVS (119 aa)) form the Response regulatory domain. Positions 10, 11, and 56 each coordinate Ca(2+). 4-aspartylphosphate is present on aspartate 56. The H-T-H motif DNA-binding region spans 196–215 (PDIAKKYNTTASRVERAIRH).

Ca(2+) serves as cofactor. Post-translationally, phosphorylated by KinA and KinB.

It is found in the cytoplasm. Its function is as follows. May play the central regulatory role in sporulation. It may be an element of the effector pathway responsible for the activation of sporulation genes in response to nutritional stress. Spo0A may act in concert with Spo0H (a sigma factor) to control the expression of some genes that are critical to the sporulation process. Repressor of abrB, activator of the spoIIa operon. Binds the DNA sequence 5'-TGNCGAA-3' (0A box). This Bacillus thuringiensis protein is Stage 0 sporulation protein A (spo0A).